A 323-amino-acid polypeptide reads, in one-letter code: Beta-ketoacyl-[acyl-carrier-protein] synthase III 1 (323 aa).

Residues cysteine 114 and histidine 254 contribute to the active site. The segment at 255-259 (QANLR) is ACP-binding. The active site involves asparagine 284.

Belongs to the thiolase-like superfamily. FabH family. In terms of assembly, homodimer.

The protein localises to the cytoplasm. The catalysed reaction is malonyl-[ACP] + acetyl-CoA + H(+) = 3-oxobutanoyl-[ACP] + CO2 + CoA. Its pathway is lipid metabolism; fatty acid biosynthesis. In terms of biological role, catalyzes the condensation reaction of fatty acid synthesis by the addition to an acyl acceptor of two carbons from malonyl-ACP. Catalyzes the first condensation reaction which initiates fatty acid synthesis and may therefore play a role in governing the total rate of fatty acid production. Possesses both acetoacetyl-ACP synthase and acetyl transacylase activities. Its substrate specificity determines the biosynthesis of branched-chain and/or straight-chain of fatty acids. In Lactiplantibacillus plantarum (strain ATCC BAA-793 / NCIMB 8826 / WCFS1) (Lactobacillus plantarum), this protein is Beta-ketoacyl-[acyl-carrier-protein] synthase III 1.